The primary structure comprises 434 residues: Galactofuranosyl glycosyltransferase (434 aa).

The Cytoplasmic segment spans residues 1–18 (MAPPRWHHDRRRMAIFVR). The helical; Signal-anchor for type II membrane protein transmembrane segment at 19–38 (VGLYTLLFLMGYVVPLIIFY) threads the bilayer. 4 N-linked (GlcNAc...) asparagine glycosylation sites follow: Asn-39, Asn-100, Asn-162, and Asn-388. Residues 39–434 (NRSRADTFED…KLLDFPVDPS (396 aa)) are Lumenal-facing.

This sequence belongs to the glycosyltransferase 2 family.

It localises to the endoplasmic reticulum membrane. The protein operates within glycolipid biosynthesis; glycosylphosphatidylinositol-anchor biosynthesis. In terms of biological role, glycosyltransferase that may be responsible for the addition of galactofuranosyl residues to the nascent lipophosphoglycan (LPG) chain. It could alternatively be involved in the synthesis of the galactofuranosyl donor. The chain is Galactofuranosyl glycosyltransferase (LPG1) from Leishmania donovani.